A 232-amino-acid polypeptide reads, in one-letter code: tRNA (guanine-N(7)-)-methyltransferase (232 aa).

Positions 63, 88, 115, and 137 each coordinate S-adenosyl-L-methionine. Asp137 is an active-site residue. Residues Lys141, Asp173, and Thr211 to Glu214 contribute to the substrate site.

This sequence belongs to the class I-like SAM-binding methyltransferase superfamily. TrmB family.

The catalysed reaction is guanosine(46) in tRNA + S-adenosyl-L-methionine = N(7)-methylguanosine(46) in tRNA + S-adenosyl-L-homocysteine. It participates in tRNA modification; N(7)-methylguanine-tRNA biosynthesis. Functionally, catalyzes the formation of N(7)-methylguanine at position 46 (m7G46) in tRNA. In Rhizobium meliloti (strain 1021) (Ensifer meliloti), this protein is tRNA (guanine-N(7)-)-methyltransferase.